Consider the following 504-residue polypeptide: Galactan beta-1,4-galactosyltransferase GALS3 (504 aa).

A helical membrane pass occupies residues 30–50; sequence LTFMALLVLCTLATLLPFIPS. A GT92 domain is found at 242-456; it reads DYLYCGSSLY…YHGSISQRRE (215 aa).

It belongs to the glycosyltransferase 92 family. As to expression, expressed in root caps, mature leaves, top of the stems and seeds.

It localises to the golgi apparatus membrane. In terms of biological role, involved in the biosynthesis of beta-1,4-galactan. Beta-1,4-galactans are abundant polysaccharides in plant cell walls and are found as side-chain of rhamnogalacturonan I, which is a major component of pectin. The sequence is that of Galactan beta-1,4-galactosyltransferase GALS3 from Arabidopsis thaliana (Mouse-ear cress).